An 801-amino-acid chain; its full sequence is Probable inorganic carbon transporter subunit DabA (801 aa).

4 residues coordinate Zn(2+): Cys-332, Asp-334, His-500, and Cys-515.

This sequence belongs to the inorganic carbon transporter (TC 9.A.2) DabA family. As to quaternary structure, forms a complex with DabB. Requires Zn(2+) as cofactor.

It localises to the cell inner membrane. In terms of biological role, part of an energy-coupled inorganic carbon pump. The polypeptide is Probable inorganic carbon transporter subunit DabA (Marinobacter nauticus (strain ATCC 700491 / DSM 11845 / VT8) (Marinobacter aquaeolei)).